The following is a 248-amino-acid chain: 4-hydroxy-tetrahydrodipicolinate reductase (248 aa).

NAD(+) is bound by residues 74–76 (GTT) and 99–102 (SANF). His134 serves as the catalytic Proton donor/acceptor. His135 lines the (S)-2,3,4,5-tetrahydrodipicolinate pocket. The Proton donor role is filled by Lys138. Residue 144–145 (GT) coordinates (S)-2,3,4,5-tetrahydrodipicolinate.

It belongs to the DapB family.

The protein localises to the cytoplasm. It catalyses the reaction (S)-2,3,4,5-tetrahydrodipicolinate + NAD(+) + H2O = (2S,4S)-4-hydroxy-2,3,4,5-tetrahydrodipicolinate + NADH + H(+). The catalysed reaction is (S)-2,3,4,5-tetrahydrodipicolinate + NADP(+) + H2O = (2S,4S)-4-hydroxy-2,3,4,5-tetrahydrodipicolinate + NADPH + H(+). Its pathway is amino-acid biosynthesis; L-lysine biosynthesis via DAP pathway; (S)-tetrahydrodipicolinate from L-aspartate: step 4/4. Its function is as follows. Catalyzes the conversion of 4-hydroxy-tetrahydrodipicolinate (HTPA) to tetrahydrodipicolinate. The chain is 4-hydroxy-tetrahydrodipicolinate reductase from Chlorobium phaeobacteroides (strain BS1).